A 233-amino-acid polypeptide reads, in one-letter code: DNA-directed RNA polymerase I subunit RPA34 (233 aa).

A phosphoserine mark is found at Ser10, Ser12, Ser14, and Ser60. Positions 179 to 191 (DFHVAEEVKENKK) are enriched in basic and acidic residues. The interval 179–233 (DFHVAEEVKENKKEPKKRSHHDDEEESSEKKKKKKEKREKREKKDKKDKKKKHRD) is disordered. Positions 208 to 233 (KKKKKKEKREKREKKDKKDKKKKHRD) are enriched in basic residues.

It belongs to the eukaryotic RPA34 RNA polymerase subunit family. As to quaternary structure, component of the RNA polymerase I (Pol I) complex consisting of 14 subunits: RPA135, RPA190, RPC40, RPA14, RPB5, RPO26, RPA43, RPB8, RPA12, RPB10, RPC19, RPC10, RPA49 and RPA34. The complex is composed of a horseshoe-shaped core containing ten subunits (RPA135, RPA190, RPB5, RPO26, RPB8, RPB10, RPC10, RPA12, RPC19 and RPC40) where RPA135 and RPA190 form the DNA-binding cleft. Outside of the core, RPA14 and RPA43 form the stalk that mediates interactions with transcription initiation factors and newly synthesized RNA. Forms a TFIIF-like heterodimer with RPA49; the heterodimer formed by RPA34 and RPA49 can be dissociated from the Pol I core giving rise to a 12 subunit form A* of Pol I (formerly called pol A) that shows impaired transcript elongation activity and increased sensitivity to alpha-amanitin. The heterodimer formed by RPA34 and RPA49 stabilizes subunit RPA12 and stimulates RPA12-dependent RNA cleavage.

Its subcellular location is the nucleus. It localises to the nucleolus. Its function is as follows. DNA-dependent RNA polymerases catalyze the transcription of DNA into RNA using the four ribonucleoside triphosphates as substrates. Component of RNA polymerase I (Pol I) which synthesizes ribosomal RNA precursors. Besides, RNA polymerase I has intrinsic RNA cleavage activity. The heterodimer formed by RPA34 and RPA49 stimulates transcript elongation by Pol I. In Saccharomyces cerevisiae (strain ATCC 204508 / S288c) (Baker's yeast), this protein is DNA-directed RNA polymerase I subunit RPA34 (RPA34).